The following is a 195-amino-acid chain: Interferon tau-9 (195 aa).

The signal sequence occupies residues 1-23; it reads MAFVLSLLMALVLVSYGPGGSLG. Cystine bridges form between Cys24/Cys122 and Cys52/Cys162.

It belongs to the alpha/beta interferon family. IFN-alphaII subfamily. As to expression, constitutively and exclusively expressed in the mononuclear cells of the extraembryonic trophectoderm.

The protein localises to the secreted. Paracrine hormone primarily responsible for maternal recognition of pregnancy. Interacts with endometrial receptors, probably type I interferon receptors, and blocks estrogen receptor expression, preventing the estrogen-induced increase in oxytocin receptor expression in the endometrium. This results in the suppression of the pulsatile endometrial release of the luteolytic hormone prostaglandin F2-alpha, hindering the regression of the corpus luteum (luteolysis) and therefore a return to ovarian cyclicity. This, and a possible direct effect of IFN-tau on prostaglandin synthesis, leads in turn to continued ovarian progesterone secretion, which stimulates the secretion by the endometrium of the nutrients required for the growth of the conceptus. In summary, displays particularly high antiviral and antiproliferative potency concurrently with particular weak cytotoxicity, high antiluteolytic activity and immunomodulatory properties. In contrast with other IFNs, IFN-tau is not virally inducible. The polypeptide is Interferon tau-9 (IFNT9) (Ovis aries (Sheep)).